A 175-amino-acid polypeptide reads, in one-letter code: ATP synthase subunit delta (175 aa).

This sequence belongs to the ATPase delta chain family. In terms of assembly, F-type ATPases have 2 components, F(1) - the catalytic core - and F(0) - the membrane proton channel. F(1) has five subunits: alpha(3), beta(3), gamma(1), delta(1), epsilon(1). F(0) has three main subunits: a(1), b(2) and c(10-14). The alpha and beta chains form an alternating ring which encloses part of the gamma chain. F(1) is attached to F(0) by a central stalk formed by the gamma and epsilon chains, while a peripheral stalk is formed by the delta and b chains.

Its subcellular location is the cell inner membrane. Functionally, f(1)F(0) ATP synthase produces ATP from ADP in the presence of a proton or sodium gradient. F-type ATPases consist of two structural domains, F(1) containing the extramembraneous catalytic core and F(0) containing the membrane proton channel, linked together by a central stalk and a peripheral stalk. During catalysis, ATP synthesis in the catalytic domain of F(1) is coupled via a rotary mechanism of the central stalk subunits to proton translocation. Its function is as follows. This protein is part of the stalk that links CF(0) to CF(1). It either transmits conformational changes from CF(0) to CF(1) or is implicated in proton conduction. The protein is ATP synthase subunit delta of Xylella fastidiosa (strain M23).